Consider the following 76-residue polypeptide: Parvalbumin beta 3 (76 aa).

Ala1 carries the post-translational modification N-acetylalanine. Residues 31 to 66 (KSPEEVKKFFAIIDQDHSGFIEEEELKLFLQTFSAG) form the EF-hand domain. Residues Asp44, Asp46, Ser48, Phe50, Glu52, and Glu55 each coordinate Ca(2+).

The protein belongs to the parvalbumin family.

In muscle, parvalbumin is thought to be involved in relaxation after contraction. It binds two calcium ions. This Merluccius polylepis (Southern hake) protein is Parvalbumin beta 3.